Here is a 192-residue protein sequence, read N- to C-terminus: Adenylate kinase (192 aa).

10-18 (GVPGVGGTT) contributes to the ATP binding site.

It belongs to the archaeal adenylate kinase family. Monomer.

The protein localises to the cytoplasm. The enzyme catalyses AMP + ATP = 2 ADP. The chain is Adenylate kinase from Methanococcus maripaludis (strain C6 / ATCC BAA-1332).